We begin with the raw amino-acid sequence, 1513 residues long: DNA topoisomerase 2-binding protein 1-A (1513 aa).

2 consecutive BRCT domains span residues 101 to 189 and 194 to 283; these read VYNM…YSDV and YLCP…MYKI. A disordered region spans residues 289–308; sequence IKSVPDTSTPTGGNSKPNSR. BRCT domains follow at residues 354-444, 530-621, and 629-726; these read APDD…IYFH, ADTS…SNAL, and EGST…SYLV. Residues 789-799 are compositionally biased toward polar residues; that stretch reads QHNKNPQTSGG. Residues 789 to 809 form a disordered region; it reads QHNKNPQTSGGESKVLQREPS. A Nuclear localization signal motif is present at residues 844–850; sequence PNQKNRT. Residues 892–984 form the BRCT 6 domain; it reads DNSKLLINVV…KRVPEALYPH (93 aa). Disordered stretches follow at residues 1031 to 1053 and 1086 to 1109; these read ETSD…SKDV and SVGR…RNGR. Position 1131 is a phosphoserine (S1131). BRCT domains follow at residues 1253 to 1344 and 1383 to 1480; these read SKEE…DYEW and IAEG…NYCL. The short motif at 1508-1511 is the Nuclear localization signal element; sequence KRSR.

This sequence belongs to the TOPBP1 family. In terms of assembly, interacts with cdc45. Interacts (via BRCT domains) with ticrr; interaction is cdk2-dependent. Interacts with atr in the presence of atrip. Interacts with recql4 (via N-terminus). Interacts with gmnc. Interacts with cip2a; forming the CIP2A-TOPBP1 complex. In terms of processing, phosphorylation at Ser-1131 is essential for phosphorylation of chek1, and thus for checkpoint regulation.

It localises to the nucleus. It is found in the chromosome. The protein localises to the cytoplasm. The protein resides in the cytoskeleton. Its subcellular location is the microtubule organizing center. It localises to the centrosome. It is found in the spindle pole. Scaffold protein that acts as a key protein-protein adapter in DNA replication and DNA repair. Composed of multiple BRCT domains, which specifically recognize and bind phosphorylated proteins, bringing proteins together into functional combinations. Required for DNA replication initiation but not for the formation of pre-replicative complexes or the elongation stages. Necessary for the loading of replication factors onto chromatin, including gmnc, cdc45, DNA polymerases and components of the GINS complex such as ginsl/sld5. Plays a central role in DNA repair by bridging proteins and promoting recruitment of proteins to DNA damage sites. Involved in double-strand break (DSB) repair via homologous recombination in S-phase by promoting the exchange between the DNA replication factor A (RPA) complex and RAD51. Involved in microhomology-mediated end-joining (MMEJ) DNA repair by promoting recruitment of polymerase theta (POLQ) to DNA damage sites during mitosis. In response to DNA damage, triggers the recruitment of checkpoint signaling proteins on chromatin, which activate the chek1 signaling pathway and block S-phase progression. Increases the kinase activity of atr to numerous substrates, and is required for the phosphorylation of Rad1. Together with cip2a, plays an essential role in the response to genome instability generated by the presence of acentric chromosome fragments derived from shattered chromosomes within micronuclei. The CIP2A-TOPBP1 complex tethers chromosome fragments during mitosis to ensure clustered segregation of the fragments to a single daughter cell nucleus, facilitating re-ligation with limited chromosome scattering and loss. This chain is DNA topoisomerase 2-binding protein 1-A (topbp1-A), found in Xenopus laevis (African clawed frog).